A 623-amino-acid polypeptide reads, in one-letter code: Transketolase (623 aa).

Met-1 is modified (N-acetylmethionine). N6-acetyllysine is present on residues Lys-6 and Lys-11. His-37 contacts substrate. Thiamine diphosphate-binding residues include Ser-40 and His-77. Ser-104 is modified (phosphoserine). 123 to 125 (GSL) lines the thiamine diphosphate pocket. Lys-144 carries the post-translational modification N6-acetyllysine. A Mg(2+)-binding site is contributed by Asp-155. Thiamine diphosphate is bound by residues Gly-156 and Asn-185. Residues Asn-185 and Leu-187 each coordinate Mg(2+). N6-acetyllysine is present on residues Lys-204, Lys-232, and Lys-241. Residues Lys-244 and His-258 each coordinate thiamine diphosphate. Substrate is bound at residue His-258. At Lys-260 the chain carries N6-acetyllysine. Tyr-275 bears the Phosphotyrosine mark. Thr-287 is modified (phosphothreonine). A Phosphoserine modification is found at Ser-295. Substrate contacts are provided by Arg-318 and Ser-345. Ser-345 is modified (phosphoserine). Lys-352 is covalently cross-linked (Glycyl lysine isopeptide (Lys-Gly) (interchain with G-Cter in SUMO2)). Glu-366 acts as the Proton donor in catalysis. Residue Phe-392 coordinates thiamine diphosphate. Substrate contacts are provided by His-416 and Asp-424. Gln-428 contributes to the thiamine diphosphate binding site. Residue Arg-474 coordinates substrate. Lys-538 and Lys-603 each carry N6-acetyllysine.

The protein belongs to the transketolase family. In terms of assembly, homodimer. The cofactor is Mg(2+). Requires Ca(2+) as cofactor. Mn(2+) is required as a cofactor. It depends on Co(2+) as a cofactor. Thiamine diphosphate serves as cofactor.

It carries out the reaction D-sedoheptulose 7-phosphate + D-glyceraldehyde 3-phosphate = aldehydo-D-ribose 5-phosphate + D-xylulose 5-phosphate. In terms of biological role, catalyzes the transfer of a two-carbon ketol group from a ketose donor to an aldose acceptor, via a covalent intermediate with the cofactor thiamine pyrophosphate. In Rattus norvegicus (Rat), this protein is Transketolase (Tkt).